Reading from the N-terminus, the 455-residue chain is Kynurenine 3-monooxygenase (455 aa).

Belongs to the aromatic-ring hydroxylase family. KMO subfamily. Requires FAD as cofactor.

It catalyses the reaction L-kynurenine + NADPH + O2 + H(+) = 3-hydroxy-L-kynurenine + NADP(+) + H2O. The protein operates within cofactor biosynthesis; NAD(+) biosynthesis; quinolinate from L-kynurenine: step 1/3. Catalyzes the hydroxylation of L-kynurenine (L-Kyn) to form 3-hydroxy-L-kynurenine (L-3OHKyn). Required for synthesis of quinolinic acid. The polypeptide is Kynurenine 3-monooxygenase (Xanthomonas oryzae pv. oryzae (strain PXO99A)).